The chain runs to 340 residues: Phenylalanine--tRNA ligase alpha subunit (340 aa).

Glu-255 is a Mg(2+) binding site.

The protein belongs to the class-II aminoacyl-tRNA synthetase family. Phe-tRNA synthetase alpha subunit type 1 subfamily. Tetramer of two alpha and two beta subunits. Mg(2+) is required as a cofactor.

The protein resides in the cytoplasm. It carries out the reaction tRNA(Phe) + L-phenylalanine + ATP = L-phenylalanyl-tRNA(Phe) + AMP + diphosphate + H(+). The chain is Phenylalanine--tRNA ligase alpha subunit from Desulfitobacterium hafniense (strain Y51).